We begin with the raw amino-acid sequence, 196 residues long: Nodulation protein A (196 aa).

It belongs to the NodA family.

The protein resides in the cytoplasm. In terms of biological role, N-acyltransferase required for nodulation. Acts in the production of a small, heat-stable compound (Nod) that stimulates mitosis in various plant protoplasts. This is Nodulation protein A from Sinorhizobium terangae.